Consider the following 402-residue polypeptide: Serine/threonine-protein phosphatase 4 regulatory subunit 2 (402 aa).

Residues 258-402 are disordered; the sequence is NEDQDDENTG…FSKRNKASES (145 aa). Over residues 266–277 the composition is skewed to polar residues; the sequence is TGFSNQVINDNN. Positions 278 to 319 are enriched in acidic residues; it reads DSQEDDDEDSDYIEEDEGDEDEDDDDDEEEEEEEDGDEDEDE. The segment covering 320 to 337 has biased composition (basic and acidic residues); that stretch reads DKHFDIKVEEEAVKEDAN. Over residues 345 to 358 the composition is skewed to low complexity; the sequence is NVSNNSDDSSLQND.

This sequence belongs to the PPP4R2 family. Regulatory subunit (R2) of the histone H2A phosphatase complex (HTP-C) consisting of PPH3, PSY2 and PSY4.

The protein resides in the nucleus. Its function is as follows. Regulatory subunit of the histone H2A phosphatase complex, which dephosphorylates H2AS128ph (gamma-H2A) that has been displaced from sites of DNA lesions in the double-stranded DNA break repair process. Dephosphorylation is necessary for efficient recovery from the DNA damage checkpoint. The polypeptide is Serine/threonine-protein phosphatase 4 regulatory subunit 2 (PSY4) (Candida glabrata (strain ATCC 2001 / BCRC 20586 / JCM 3761 / NBRC 0622 / NRRL Y-65 / CBS 138) (Yeast)).